Here is a 622-residue protein sequence, read N- to C-terminus: MSASSSDPFHSFAKTSFTSKAAKRATAHSLPPLPGPGDLPPGMNVEYDVAIVGSGPIGSTYARELVEAGFNVAMFEIGEIDSGLKIGSHKKNTVEYQKNIDKFVNVIQGQLMPVSVPVNTMVVDTLSPASWQASTFFVRNGANPEQDPLRNLSGQAVTRVVGGMSTHWTCATPRFEKLQRPLLVKNDPVADDAEWDRLYKKAESYFKTGTTQFAESIRHNLVLKKLQEEYKGVRDFQQIPLAATRQSPTFVEWSSAHTVFDLENRPNKDAPKQRFNLFPAVACTSVRRNDANSEIIGLDVRDLHGGKSITIKAKVYILTAGAVHNAQLLAASGFGQLGRPDPAKPLPSLLPYLGTHITEQTLVFCQTVMSTELINSVTADMTIVGKPGDPDYSVTYTSGSPNNKHPDWWNEKVKKHMMDHQEDPLPIPFEDPEPQVTTLFKASHPWHTQIHRDAFSYGAVQQSIDSRLIVDWRFFGRTEPKEENKLWFSDKITDAYNLPQPTFDFRFPGGREAEDMMTDMCVMSAKIGGFLPGSYPQFMEPGLVLHLGGTHRMGFDEKADKCCVDTDSRVFGFKNLFLGGCGNIPTAYAANPTLTAMSLAIKSCEYIKKNFEPSPNPVKHHN.

The signal sequence occupies residues 1-28; the sequence is MSASSSDPFHSFAKTSFTSKAAKRATAH. The propeptide occupies 29-37; that stretch reads SLPPLPGPG. Tele-8alpha-FAD histidine is present on histidine 167. Residues glutamine 449 and histidine 451 each coordinate substrate. Histidine 546 functions as the Proton acceptor in the catalytic mechanism. Residue asparagine 591 is part of the active site.

The protein belongs to the GMC oxidoreductase family. Homotetramer. The cofactor is FAD. In terms of processing, not glycosylated.

Its subcellular location is the periplasm. The catalysed reaction is D-glucose + O2 = 2-dehydro-D-glucose + H2O2. In terms of biological role, catalyzes the oxidation of various aldopyranoses and disaccharides on carbon-2 to the corresponding 2-keto sugars concomitant with the reduction of O(2) to H(2)O(2). Plays an important role in lignin degradation of wood rot fungi by supplying the essential cosubstrate H(2)O(2) for the ligninolytic peroxidases, lignin peroxidase and manganese-dependent peroxidase. The preferred substrate is D-glucose which is converted to 2-dehydro-D-glucose, an intermediate of a secondary metabolic pathway leading to the antibiotic cortalcerone. Also acts on D-xylose, together with D-glucose the major sugars derived from wood, on L-sorbose, D-galactose and 1,5-anhydroglucitol, a diagnostic marker of diabetes mellitus. The protein is Pyranose 2-oxidase (p2ox) of Phlebiopsis gigantea (White-rot fungus).